Here is a 311-residue protein sequence, read N- to C-terminus: tRNA-cytidine(32) 2-sulfurtransferase (311 aa).

The PP-loop motif motif lies at 45–50 (SGGKDS). [4Fe-4S] cluster contacts are provided by cysteine 120, cysteine 123, and cysteine 211.

The protein belongs to the TtcA family. In terms of assembly, homodimer. It depends on Mg(2+) as a cofactor. The cofactor is [4Fe-4S] cluster.

Its subcellular location is the cytoplasm. The enzyme catalyses cytidine(32) in tRNA + S-sulfanyl-L-cysteinyl-[cysteine desulfurase] + AH2 + ATP = 2-thiocytidine(32) in tRNA + L-cysteinyl-[cysteine desulfurase] + A + AMP + diphosphate + H(+). It participates in tRNA modification. Its function is as follows. Catalyzes the ATP-dependent 2-thiolation of cytidine in position 32 of tRNA, to form 2-thiocytidine (s(2)C32). The sulfur atoms are provided by the cysteine/cysteine desulfurase (IscS) system. The protein is tRNA-cytidine(32) 2-sulfurtransferase of Shewanella halifaxensis (strain HAW-EB4).